A 517-amino-acid polypeptide reads, in one-letter code: Alpha-amylase (517 aa).

A signal peptide spans 1-21 (MAHLLLAVVAITLALSQSVFG). An intrachain disulfide couples cysteine 52 to cysteine 108. Ca(2+)-binding residues include asparagine 122, arginine 178, and aspartate 187. Position 215 (arginine 215) interacts with chloride. The active-site Nucleophile is aspartate 217. Position 221 (histidine 221) interacts with Ca(2+). Glutamate 253 (proton donor) is an active-site residue. Residue arginine 355 participates in chloride binding. 2 cysteine pairs are disulfide-bonded: cysteine 397–cysteine 403 and cysteine 470–cysteine 482.

Belongs to the glycosyl hydrolase 13 family. In terms of assembly, monomer. The cofactor is Ca(2+). Chloride serves as cofactor.

The protein localises to the secreted. The enzyme catalyses Endohydrolysis of (1-&gt;4)-alpha-D-glucosidic linkages in polysaccharides containing three or more (1-&gt;4)-alpha-linked D-glucose units.. Activated by chloride ions. Inhibited by acarbose. Not inhibited by wheat alpha-amylase inhibitors 1 (WI-1, the tetrameric form) or 3 (WI-3, the monomeric form) and bean alpha-amylase inhibitor 1 (alphaAI-1). This Acarus siro (Flour mite) protein is Alpha-amylase.